The following is a 189-amino-acid chain: dCTP deaminase (189 aa).

DCTP contacts are provided by residues 112 to 117 (KSTYAR), 136 to 138 (TLE), Q157, Y171, and Q181. Residue E138 is the Proton donor/acceptor of the active site.

Belongs to the dCTP deaminase family. In terms of assembly, homotrimer.

It catalyses the reaction dCTP + H2O + H(+) = dUTP + NH4(+). It functions in the pathway pyrimidine metabolism; dUMP biosynthesis; dUMP from dCTP (dUTP route): step 1/2. Its function is as follows. Catalyzes the deamination of dCTP to dUTP. The protein is dCTP deaminase of Paraburkholderia phymatum (strain DSM 17167 / CIP 108236 / LMG 21445 / STM815) (Burkholderia phymatum).